We begin with the raw amino-acid sequence, 849 residues long: Serine/threonine-protein phosphatase 4 regulatory subunit 3B (849 aa).

The WH1 domain occupies 1–100 (MSDTRRRVKV…DEIWEKICQV (100 aa)). 2 positions are modified to phosphoserine: serine 117 and serine 695. The segment covering 714–724 (EMWFNEDEEEE) has biased composition (acidic residues). Residues 714–849 (EMWFNEDEEE…SPRKRPRLGS (136 aa)) are disordered. Positions 733 to 764 (EKPKPEDDFPDNYEKFMETKKAKESEDKENLP) are enriched in basic and acidic residues. A compositionally biased stretch (polar residues) spans 776 to 818 (FSHSASAANGTNSKSVVAQIPPATSNGSSSKTTNLPTSVTATK). Over residues 827-838 (YPDDEEEDEEEE) the composition is skewed to acidic residues. Serine 840 carries the post-translational modification Phosphoserine.

It belongs to the SMEK family. In terms of assembly, serine/threonine-protein phosphatase 4 (PP4) occurs in different assemblies of the catalytic and one or more regulatory subunits. Component of the PP4 complex PPP4C-PPP4R2-PPP4R3B. In terms of tissue distribution, moderately expressed in tissues and specific brain regions examined.

The protein localises to the cytoplasm. The protein resides in the cytoskeleton. It localises to the microtubule organizing center. Its subcellular location is the centrosome. It is found in the nucleus. Regulatory subunit of serine/threonine-protein phosphatase 4 (PP4). May regulate the activity of PPP4C at centrosomal microtubule organizing centers. The sequence is that of Serine/threonine-protein phosphatase 4 regulatory subunit 3B from Homo sapiens (Human).